The following is a 31-amino-acid chain: Cytochrome b6-f complex subunit 6 (31 aa).

The helical transmembrane segment at 4 to 26 (LTSYFGFLLAALTITSALFIGLN) threads the bilayer.

It belongs to the PetL family. The 4 large subunits of the cytochrome b6-f complex are cytochrome b6, subunit IV (17 kDa polypeptide, PetD), cytochrome f and the Rieske protein, while the 4 small subunits are PetG, PetL, PetM and PetN. The complex functions as a dimer.

The protein resides in the plastid. It is found in the chloroplast thylakoid membrane. Component of the cytochrome b6-f complex, which mediates electron transfer between photosystem II (PSII) and photosystem I (PSI), cyclic electron flow around PSI, and state transitions. PetL is important for photoautotrophic growth as well as for electron transfer efficiency and stability of the cytochrome b6-f complex. This is Cytochrome b6-f complex subunit 6 from Amaranthus caudatus (Love-lies-bleeding).